A 188-amino-acid polypeptide reads, in one-letter code: Ribosome maturation factor RimM (188 aa).

Positions 96–169 (DDEFYYADLE…RILIDPMAAG (74 aa)) constitute a PRC barrel domain.

The protein belongs to the RimM family. In terms of assembly, binds ribosomal protein uS19.

The protein resides in the cytoplasm. An accessory protein needed during the final step in the assembly of 30S ribosomal subunit, possibly for assembly of the head region. Essential for efficient processing of 16S rRNA. May be needed both before and after RbfA during the maturation of 16S rRNA. It has affinity for free ribosomal 30S subunits but not for 70S ribosomes. This Agrobacterium fabrum (strain C58 / ATCC 33970) (Agrobacterium tumefaciens (strain C58)) protein is Ribosome maturation factor RimM.